Here is a 387-residue protein sequence, read N- to C-terminus: Proteinase R (387 aa).

A signal peptide spans 1 to 21 (MRLSILLGLLPLAPRPPAVDA). The propeptide occupies 22–108 (VEQRSEPAPL…IEQDAIVNIN (87 aa)). An Inhibitor I9 domain is found at 42-107 (KYIVKLKEGS…YIEQDAIVNI (66 aa)). The Peptidase S8 domain occupies 115–387 (PWGLARISST…NLLAYNNYQG (273 aa)). Thr124 contacts Ca(2+). Intrachain disulfides connect Cys142–Cys231 and Cys286–Cys357. Active-site charge relay system residues include Asp147 and His177. A Ca(2+)-binding site is contributed by Asp308. The active-site Charge relay system is the Ser332. A Ca(2+)-binding site is contributed by Asp368.

The protein belongs to the peptidase S8 family. Ca(2+) is required as a cofactor.

Its function is as follows. Serine proteinase. The chain is Proteinase R (PROR) from Parengyodontium album (Tritirachium album).